Reading from the N-terminus, the 87-residue chain is Small polypeptide DEVIL 11 (87 aa).

The span at 1-11 shows a compositional bias: polar residues; it reads MASSSSLTRSG. The interval 1–47 is disordered; the sequence is MASSSSLTRSGSVHLDEKWKLSKKDGGASRITRSSSTSSSSFNGKKQ. Basic and acidic residues predominate over residues 14–27; sequence HLDEKWKLSKKDGG. A compositionally biased stretch (low complexity) spans 29–41; the sequence is SRITRSSSTSSSS. Residues 51–82 are required for DVL/RTFL small polypeptide activity; that stretch reads AFTRKCARLVKEQRARFYIMRRCVIMLICWRD. The chain crosses the membrane as a helical span at residues 64-80; that stretch reads RARFYIMRRCVIMLICW. A glycan (N-linked (GlcNAc...) asparagine) is linked at Asn-83.

It belongs to the DVL/RTFL small polypeptides family.

Its subcellular location is the cell membrane. In terms of biological role, small polypeptide acting as a regulatory molecule which coordinates cellular responses required for differentiation, growth and development, probably by restricting polar cell proliferation in lateral organs and coordinating socket cell recruitment and differentiation at trichome sites. The polypeptide is Small polypeptide DEVIL 11 (Arabidopsis thaliana (Mouse-ear cress)).